The primary structure comprises 459 residues: U-box domain-containing protein 75 (459 aa).

Residues 64-138 (AVPAVFICPI…AAWFSRRYTR (75 aa)) form the U-box domain. ARM repeat units lie at residues 188-229 (QSVT…GVPL) and 231-270 (ADAKAALMQPAKVSLLVDMLNEGAVDTKINCVRLIRILME).

In terms of assembly, interacts with GPA1. As to expression, expressed highly in panicles at flowering time, at moderate levels in vegetative shoot apices, leaf sheaths, leaf blades, and elongating internodes, and at low levels in roots.

Its subcellular location is the cell membrane. The enzyme catalyses S-ubiquitinyl-[E2 ubiquitin-conjugating enzyme]-L-cysteine + [acceptor protein]-L-lysine = [E2 ubiquitin-conjugating enzyme]-L-cysteine + N(6)-ubiquitinyl-[acceptor protein]-L-lysine.. The protein operates within protein modification; protein ubiquitination. Functionally, E3 ubiquitin ligase that may function as positive regulator of brassinosteroid (BR) signaling. Possesses E3 ubiquitin ligase in vitro. Acts together with the heterotrimeric G alpha subunit GPA1 at the plasma membrane to mediate a BR signaling pathway that affects plant growth and development. Does not seem to be involved in gibberellin or cytokinin responses. This is U-box domain-containing protein 75 from Oryza sativa subsp. japonica (Rice).